The following is a 507-amino-acid chain: ATP synthase subunit alpha, chloroplastic (507 aa).

170–177 serves as a coordination point for ATP; the sequence is GDRQTGKT. Disordered stretches follow at residues 278–325, 392–430, and 452–471; these read PRRP…TQAG, EPEA…APLP, and GQVQ…NKPE. A compositionally biased stretch (basic and acidic residues) spans 282–303; sequence PGREAHPGDVPHLHPRPPERAA. Polar residues predominate over residues 305–322; it reads LSSQPGEGSTTASPTVET.

The protein belongs to the ATPase alpha/beta chains family. As to quaternary structure, F-type ATPases have 2 components, CF(1) - the catalytic core - and CF(0) - the membrane proton channel. CF(1) has five subunits: alpha(3), beta(3), gamma(1), delta(1), epsilon(1). CF(0) has four main subunits: a, b, b' and c.

The protein resides in the plastid. The protein localises to the chloroplast thylakoid membrane. It carries out the reaction ATP + H2O + 4 H(+)(in) = ADP + phosphate + 5 H(+)(out). In terms of biological role, produces ATP from ADP in the presence of a proton gradient across the membrane. The alpha chain is a regulatory subunit. The sequence is that of ATP synthase subunit alpha, chloroplastic from Selaginella uncinata (Blue spike-moss).